A 642-amino-acid polypeptide reads, in one-letter code: Threonine--tRNA ligase (642 aa).

One can recognise a TGS domain in the interval 1–61; the sequence is MPIITLPDGS…SEDANLEIIT (61 aa). A catalytic region spans residues 243-534; it reads DHRKIGKALD…ITEEYAGFFP (292 aa). Zn(2+)-binding residues include cysteine 334, histidine 385, and histidine 511.

This sequence belongs to the class-II aminoacyl-tRNA synthetase family. Homodimer. Requires Zn(2+) as cofactor.

It is found in the cytoplasm. The enzyme catalyses tRNA(Thr) + L-threonine + ATP = L-threonyl-tRNA(Thr) + AMP + diphosphate + H(+). Its function is as follows. Catalyzes the attachment of threonine to tRNA(Thr) in a two-step reaction: L-threonine is first activated by ATP to form Thr-AMP and then transferred to the acceptor end of tRNA(Thr). Also edits incorrectly charged L-seryl-tRNA(Thr). This is Threonine--tRNA ligase from Histophilus somni (strain 129Pt) (Haemophilus somnus).